Here is a 553-residue protein sequence, read N- to C-terminus: Glycerol-3-phosphate dehydrogenase (553 aa).

Asp13–Glu41 provides a ligand contact to FAD.

Belongs to the FAD-dependent glycerol-3-phosphate dehydrogenase family. FAD serves as cofactor.

It localises to the cytoplasm. The enzyme catalyses a quinone + sn-glycerol 3-phosphate = dihydroxyacetone phosphate + a quinol. The protein is Glycerol-3-phosphate dehydrogenase (glpD) of Synechocystis sp. (strain ATCC 27184 / PCC 6803 / Kazusa).